Reading from the N-terminus, the 776-residue chain is Structure-specific endonuclease subunit SLX4 (776 aa).

Residues 201-217 (EEQMVSDDNSSTEDDTD) show a composition bias toward acidic residues. Disordered stretches follow at residues 201–223 (EEQMVSDDNSSTEDDTDPTQNDG), 263–283 (KSLQRHSQKDSDNGNTIPDQN), and 507–531 (PPLDACSDSGPTGVVSSMPYKKPHS).

Belongs to the SLX4 family. Forms a heterodimer with SLX1. Phosphorylated in response to DNA damage.

It localises to the nucleus. Its function is as follows. Regulatory subunit of the SLX1-SLX4 structure-specific endonuclease that resolves DNA secondary structures generated during DNA repair and recombination. Has endonuclease activity towards branched DNA substrates, introducing single-strand cuts in duplex DNA close to junctions with ss-DNA. The protein is Structure-specific endonuclease subunit SLX4 of Candida albicans (strain SC5314 / ATCC MYA-2876) (Yeast).